Reading from the N-terminus, the 442-residue chain is ATP-dependent protease ATPase subunit HslU (442 aa).

Residues I18 and 60–65 (GVGKTE) contribute to the ATP site. The interval 133 to 156 (DALLPKPKNDWDNTDSDTSSNTRQ) is disordered. The ATP site is built by D255, E320, and R392.

This sequence belongs to the ClpX chaperone family. HslU subfamily. As to quaternary structure, a double ring-shaped homohexamer of HslV is capped on each side by a ring-shaped HslU homohexamer. The assembly of the HslU/HslV complex is dependent on binding of ATP.

The protein localises to the cytoplasm. Functionally, ATPase subunit of a proteasome-like degradation complex; this subunit has chaperone activity. The binding of ATP and its subsequent hydrolysis by HslU are essential for unfolding of protein substrates subsequently hydrolyzed by HslV. HslU recognizes the N-terminal part of its protein substrates and unfolds these before they are guided to HslV for hydrolysis. In Shewanella sp. (strain ANA-3), this protein is ATP-dependent protease ATPase subunit HslU.